The chain runs to 572 residues: Proline--tRNA ligase (572 aa).

The protein belongs to the class-II aminoacyl-tRNA synthetase family. ProS type 1 subfamily. Homodimer.

The protein resides in the cytoplasm. It carries out the reaction tRNA(Pro) + L-proline + ATP = L-prolyl-tRNA(Pro) + AMP + diphosphate. Catalyzes the attachment of proline to tRNA(Pro) in a two-step reaction: proline is first activated by ATP to form Pro-AMP and then transferred to the acceptor end of tRNA(Pro). As ProRS can inadvertently accommodate and process non-cognate amino acids such as alanine and cysteine, to avoid such errors it has two additional distinct editing activities against alanine. One activity is designated as 'pretransfer' editing and involves the tRNA(Pro)-independent hydrolysis of activated Ala-AMP. The other activity is designated 'posttransfer' editing and involves deacylation of mischarged Ala-tRNA(Pro). The misacylated Cys-tRNA(Pro) is not edited by ProRS. In Dichelobacter nodosus (strain VCS1703A), this protein is Proline--tRNA ligase.